A 529-amino-acid polypeptide reads, in one-letter code: ATP synthase subunit alpha (529 aa).

173–180 (GDRQTGKT) serves as a coordination point for ATP.

Belongs to the ATPase alpha/beta chains family. As to quaternary structure, F-type ATPases have 2 components, CF(1) - the catalytic core - and CF(0) - the membrane proton channel. CF(1) has five subunits: alpha(3), beta(3), gamma(1), delta(1), epsilon(1). CF(0) has three main subunits: a(1), b(2) and c(9-12). The alpha and beta chains form an alternating ring which encloses part of the gamma chain. CF(1) is attached to CF(0) by a central stalk formed by the gamma and epsilon chains, while a peripheral stalk is formed by the delta and b chains.

It localises to the cell membrane. It catalyses the reaction ATP + H2O + 4 H(+)(in) = ADP + phosphate + 5 H(+)(out). Its function is as follows. Produces ATP from ADP in the presence of a proton gradient across the membrane. The alpha chain is a regulatory subunit. The sequence is that of ATP synthase subunit alpha from Streptomyces lividans.